Here is a 389-residue protein sequence, read N- to C-terminus: Probable zinc transporter zip2 (389 aa).

Helical transmembrane passes span Gly6–Leu26, Leu48–Met68, Val88–Leu108, Val267–Ala289, Ser305–Gly325, Phe329–Ser349, and His368–Ser388.

This sequence belongs to the ZIP transporter (TC 2.A.5) family.

It is found in the endoplasmic reticulum membrane. Probable zinc transporter that may mediate zinc remobilization from the endoplasmic reticulum under zinc limitation. This is Probable zinc transporter zip2 (zip2) from Schizosaccharomyces pombe (strain 972 / ATCC 24843) (Fission yeast).